The following is a 276-amino-acid chain: UPF0328 protein ECU04_0100 (276 aa).

Residues 1–24 (MGIIDVQRSHLTATPSKERDAPAH) are disordered.

Belongs to the UPF0328 family.

This chain is UPF0328 protein ECU04_0100, found in Encephalitozoon cuniculi (strain GB-M1) (Microsporidian parasite).